The chain runs to 101 residues: uncharacterized protein (101 aa).

A run of 2 helical transmembrane segments spans residues I3–F23 and V68–I88.

It is found in the cell membrane. This is an uncharacterized protein from Ureaplasma parvum serovar 3 (strain ATCC 700970).